We begin with the raw amino-acid sequence, 60 residues long: Protein MGF 360-5L (60 aa).

It belongs to the asfivirus MGF 360 family.

Functionally, plays a role in virus cell tropism, and may be required for efficient virus replication in macrophages. This chain is Protein MGF 360-5L, found in Ornithodoros (relapsing fever ticks).